A 329-amino-acid polypeptide reads, in one-letter code: Ornithine carbamoyltransferase (329 aa).

Carbamoyl phosphate is bound by residues 51–54 (STRT), glutamine 78, arginine 102, and 129–132 (HPVQ). Residues asparagine 174, aspartate 238, and 242-243 (SM) contribute to the L-ornithine site. Carbamoyl phosphate contacts are provided by residues 278–279 (CL) and arginine 306.

This sequence belongs to the aspartate/ornithine carbamoyltransferase superfamily. OTCase family.

The protein resides in the cytoplasm. It catalyses the reaction carbamoyl phosphate + L-ornithine = L-citrulline + phosphate + H(+). It functions in the pathway amino-acid biosynthesis; L-arginine biosynthesis; L-arginine from L-ornithine and carbamoyl phosphate: step 1/3. Reversibly catalyzes the transfer of the carbamoyl group from carbamoyl phosphate (CP) to the N(epsilon) atom of ornithine (ORN) to produce L-citrulline. The chain is Ornithine carbamoyltransferase from Helicobacter hepaticus (strain ATCC 51449 / 3B1).